The chain runs to 711 residues: MKSLILAEKPSVARDIADALQINQKRNGYFENNQYIVTWALGHLVTNATPEQYDKNLKEWRLEDLPIIPKYMKTVVIGKTSKQFKTVKALILDNKVKDIIIATDAGREGELVARLILDKVGNKKPIRRLWISSVTKKAIQQGFKNLKDGRQYNDLYYAALARSEADWIVGINATRALTTKYDAQLSLGRVQTPTIQLVNTRQQEINQFKPQQYFTLSLTVKGFDFQLESNQRYTNKETLEQMVNNLKNVDGKIKSVATKHKKSYPQSLYNLTDLQQDMYRRYKIGPKETLNTLQSLYERHKVVTYPRTDSNYLTTDMVDTMKERIQATMATTYKDQARPLMSKTFSSKMSIFNNQKVSDHHAIIPTEVRPVMSDLSNRELKLYDMIVERFLEALMPPHEYDAITVTLEVAGHTFVLKENVTTVLGFKSIRQGESITEMQQPFSEGDEVKISKTNIREHETTPPEYFNEGSLLKAMENPQNFIQLKDKKYAQTLKQTGGIGTVATRADIIDKLFNMNAIESRDGKIKVTSKGKQILELAPEELTSPLLTAQWEEKLLLIERGKYQAKTFINEMKDFTKDVVNGIKNSDRKYKHDNLTTTECPTCGKFMIKVKTKNGQMLVCQDPSCKTKKNVQRKTNARCPNCKKKLTLFGKGKEAVYRCVCGHSETQAHMDQRMKSKSSGKVSRKEMKKYMNKNEGLDNNPFKDALKNLNL.

The Toprim domain maps to K2–T135. 2 residues coordinate Mg(2+): E8 and D104. The region spanning Y152–V580 is the Topo IA-type catalytic domain. The interval S186–Q191 is interaction with DNA. Residue Y305 is the O-(5'-phospho-DNA)-tyrosine intermediate of the active site. The segment at M691–L711 is disordered.

Belongs to the type IA topoisomerase family. It depends on Mg(2+) as a cofactor.

It catalyses the reaction ATP-independent breakage of single-stranded DNA, followed by passage and rejoining.. Its function is as follows. Releases the supercoiling and torsional tension of DNA, which is introduced during the DNA replication and transcription, by transiently cleaving and rejoining one strand of the DNA duplex. Introduces a single-strand break via transesterification at a target site in duplex DNA. The scissile phosphodiester is attacked by the catalytic tyrosine of the enzyme, resulting in the formation of a DNA-(5'-phosphotyrosyl)-enzyme intermediate and the expulsion of a 3'-OH DNA strand. The free DNA strand then undergoes passage around the unbroken strand, thus removing DNA supercoils. Finally, in the religation step, the DNA 3'-OH attacks the covalent intermediate to expel the active-site tyrosine and restore the DNA phosphodiester backbone. This Staphylococcus aureus (strain Mu50 / ATCC 700699) protein is DNA topoisomerase 3.